Here is an 896-residue protein sequence, read N- to C-terminus: Isoleucine--tRNA ligase (896 aa).

The short motif at 57 to 67 is the 'HIGH' region element; sequence PYANNNIHIGH. Position 543 (Glu-543) interacts with L-isoleucyl-5'-AMP. The 'KMSKS' region signature appears at 584 to 588; the sequence is KMSKS. Lys-587 contacts ATP. Zn(2+) is bound by residues Cys-869, Cys-872, Cys-885, and Cys-888.

This sequence belongs to the class-I aminoacyl-tRNA synthetase family. IleS type 1 subfamily. As to quaternary structure, monomer. Zn(2+) is required as a cofactor.

The protein resides in the cytoplasm. The enzyme catalyses tRNA(Ile) + L-isoleucine + ATP = L-isoleucyl-tRNA(Ile) + AMP + diphosphate. Its function is as follows. Catalyzes the attachment of isoleucine to tRNA(Ile). As IleRS can inadvertently accommodate and process structurally similar amino acids such as valine, to avoid such errors it has two additional distinct tRNA(Ile)-dependent editing activities. One activity is designated as 'pretransfer' editing and involves the hydrolysis of activated Val-AMP. The other activity is designated 'posttransfer' editing and involves deacylation of mischarged Val-tRNA(Ile). This is Isoleucine--tRNA ligase from Acholeplasma laidlawii (strain PG-8A).